The sequence spans 320 residues: MPSQLEALRRHTVVVADTGDFEAMRALRPTDATTNPSLILKAVQQEAYRPLLVQTARAHQGASPAEITDRLLVAFGRQILDIVPGRVSTEVDARLSFDTRATVERARGLIALYQAAGVPRERVLIKIASTWEGIQAARVLQAEGIRCNLTLLFCLPQAAACADAGVQLISPFVGRIYDWHKKNAGAEWVEDARRGANDPGVQSVSRIYRYYKRFGIETEIMGASFRNVDQILALAGCDLLTISPELLTRLSQTEGEVPAALSPQAGHDDADAVRLDGGEVAFRTQLNEDAMASEKLSEGIRLFVADARKLDALIESHGAA.

The active-site Schiff-base intermediate with substrate is Lys126.

This sequence belongs to the transaldolase family. Type 1 subfamily. As to quaternary structure, homodimer.

The protein localises to the cytoplasm. It catalyses the reaction D-sedoheptulose 7-phosphate + D-glyceraldehyde 3-phosphate = D-erythrose 4-phosphate + beta-D-fructose 6-phosphate. Its pathway is carbohydrate degradation; pentose phosphate pathway; D-glyceraldehyde 3-phosphate and beta-D-fructose 6-phosphate from D-ribose 5-phosphate and D-xylulose 5-phosphate (non-oxidative stage): step 2/3. Its function is as follows. Transaldolase is important for the balance of metabolites in the pentose-phosphate pathway. The chain is Transaldolase from Bordetella bronchiseptica (strain ATCC BAA-588 / NCTC 13252 / RB50) (Alcaligenes bronchisepticus).